Reading from the N-terminus, the 98-residue chain is NADH-ubiquinone oxidoreductase chain 4L (98 aa).

A run of 3 helical transmembrane segments spans residues 1–21 (MSPI…GLLI), 30–50 (LLCL…LALT), and 61–81 (IILL…LVMV).

It belongs to the complex I subunit 4L family. As to quaternary structure, core subunit of respiratory chain NADH dehydrogenase (Complex I) which is composed of 45 different subunits.

Its subcellular location is the mitochondrion inner membrane. It catalyses the reaction a ubiquinone + NADH + 5 H(+)(in) = a ubiquinol + NAD(+) + 4 H(+)(out). In terms of biological role, core subunit of the mitochondrial membrane respiratory chain NADH dehydrogenase (Complex I) which catalyzes electron transfer from NADH through the respiratory chain, using ubiquinone as an electron acceptor. Part of the enzyme membrane arm which is embedded in the lipid bilayer and involved in proton translocation. This chain is NADH-ubiquinone oxidoreductase chain 4L (MT-ND4L), found in Chrysochloris asiatica (Cape golden mole).